Reading from the N-terminus, the 354-residue chain is MSQSTYSLEQLADFLKVEFQGNGATLLSGVEEIEEAKTAHITFLDNEKYAKHLKSSEAGAIIISRTQFQKYRDLNKNFLITSESPSLVFQKCLELFITPVDSGFPGIHPTAVIHPTAIIEDHVCIEPYAVVCQHAHVGSACHIGSGSVIGAYSTVGQHSYIHPRVVIRERVSIGKRVIIQPGAVIGSCGFGYVTSAFGQHKHLKHLGKVIIEDDVEIGANTTIDRGRFKHSVVREGSKIDNLVQIAHQVEVGQHSMIVAQAGIAGSTKIGNHVIIGGQAGITGHICIADHVIMMAQTGVTKSITSPGIYGGAPARPYQEIHRQVAKVRNLPRLEERIAALEKLVQKLEALSEQH.

Catalysis depends on histidine 247, which acts as the Proton acceptor.

The protein belongs to the transferase hexapeptide repeat family. LpxD subfamily. Homotrimer.

It catalyses the reaction a UDP-3-O-[(3R)-3-hydroxyacyl]-alpha-D-glucosamine + a (3R)-hydroxyacyl-[ACP] = a UDP-2-N,3-O-bis[(3R)-3-hydroxyacyl]-alpha-D-glucosamine + holo-[ACP] + H(+). It participates in bacterial outer membrane biogenesis; LPS lipid A biosynthesis. Its function is as follows. Catalyzes the N-acylation of UDP-3-O-acylglucosamine using 3-hydroxyacyl-ACP as the acyl donor. Is involved in the biosynthesis of lipid A, a phosphorylated glycolipid that anchors the lipopolysaccharide to the outer membrane of the cell. This chain is UDP-3-O-acylglucosamine N-acyltransferase, found in Chlamydia trachomatis serovar L2 (strain ATCC VR-902B / DSM 19102 / 434/Bu).